Reading from the N-terminus, the 376-residue chain is PCM7-4 (376 aa).

Has antibacterial activity against Listeria monocytogenes. The polypeptide is PCM7-4 (Bacillus velezensis).